Here is a 131-residue protein sequence, read N- to C-terminus: C-C motif chemokine 21 (131 aa).

An N-terminal signal peptide occupies residues 1 to 23 (MAQSLALSLLILVLAFGIPGTQG). Intrachain disulfides connect cysteine 31-cysteine 57, cysteine 32-cysteine 75, and cysteine 103-cysteine 119. Positions 89–131 (HLDKTPTPRKPVQGCRKDRGVPKNGKKGKGCKRTEQSQTPKGP) are disordered.

It belongs to the intercrine beta (chemokine CC) family. In terms of assembly, monomer. Binds to CCR7. Interacts with PDPN; relocalizes PDPN to the basolateral membrane. Interacts with TNFAIP6 (via Link domain). Interacts with GPR174.

It is found in the secreted. In terms of biological role, inhibits hemopoiesis and stimulates chemotaxis. Chemotactic in vitro for thymocytes and activated T-cells, but not for B-cells, macrophages, or neutrophils. Shows preferential activity towards naive T-cells. May play a role in mediating homing of lymphocytes to secondary lymphoid organs. Binds to atypical chemokine receptor ACKR4 and mediates the recruitment of beta-arrestin (ARRB1/2) to ACKR4. This chain is C-C motif chemokine 21 (CCL21), found in Macaca mulatta (Rhesus macaque).